The chain runs to 658 residues: Probable rhamnogalacturonate lyase B (658 aa).

An N-terminal signal peptide occupies residues 1–19 (MRFAIPLGAACAWAGVALA). N-linked (GlcNAc...) asparagine glycans are attached at residues asparagine 110, asparagine 143, asparagine 239, asparagine 280, asparagine 522, asparagine 530, asparagine 592, and asparagine 633.

It belongs to the polysaccharide lyase 4 family.

It localises to the secreted. It catalyses the reaction Endotype eliminative cleavage of L-alpha-rhamnopyranosyl-(1-&gt;4)-alpha-D-galactopyranosyluronic acid bonds of rhamnogalacturonan I domains in ramified hairy regions of pectin leaving L-rhamnopyranose at the reducing end and 4-deoxy-4,5-unsaturated D-galactopyranosyluronic acid at the non-reducing end.. Its function is as follows. Pectinolytic enzymes consist of four classes of enzymes: pectin lyase, polygalacturonase, pectin methylesterase and rhamnogalacturonase. Degrades the rhamnogalacturonan I (RG-I) backbone of pectin. The polypeptide is Probable rhamnogalacturonate lyase B (rglB) (Aspergillus fumigatus (strain CBS 144.89 / FGSC A1163 / CEA10) (Neosartorya fumigata)).